Reading from the N-terminus, the 324-residue chain is Glucokinase (324 aa).

6–11 (IDIGGT) contacts ATP.

It belongs to the bacterial glucokinase family.

It is found in the cytoplasm. The enzyme catalyses D-glucose + ATP = D-glucose 6-phosphate + ADP + H(+). This is Glucokinase from Zymomonas mobilis subsp. mobilis (strain ATCC 31821 / ZM4 / CP4).